Consider the following 215-residue polypeptide: Sperm acrosome membrane-associated protein 3 (215 aa).

At 1–63 the chain is on the cytoplasmic side; sequence MVSALRGAPL…EARSRALRRR (63 aa). The chain crosses the membrane as a helical; Signal-anchor for type II membrane protein span at residues 64–84; sequence WCPAGIMLLALVCLLSCLLPS. The Extracellular segment spans residues 85–215; the sequence is SEAKLYGRCE…LTEWVDGCDF (131 aa). Residues 88 to 215 enclose the C-type lysozyme domain; that stretch reads KLYGRCELAR…LTEWVDGCDF (128 aa). 4 disulfides stabilise this stretch: Cys-93-Cys-213, Cys-117-Cys-201, Cys-151-Cys-166, and Cys-162-Cys-180.

It belongs to the glycosyl hydrolase 22 family. As to quaternary structure, interacts with ASTL. In terms of processing, the processed form derives from the membrane form by proteolytic processing. The processed form is expressed in sperm (at protein level). Expressed in testis, epididymis and placenta.

It is found in the cytoplasmic vesicle. Its subcellular location is the secretory vesicle. The protein localises to the acrosome membrane. The protein resides in the secreted. Sperm surface membrane protein that may be involved in sperm-egg plasma membrane adhesion and fusion during fertilization. It could be a potential receptor for the egg oligosaccharide residue N-acetylglucosamine, which is present in the extracellular matrix over the egg plasma membrane. The processed form has no detectable bacteriolytic activity in vitro. The sequence is that of Sperm acrosome membrane-associated protein 3 (SPACA3) from Homo sapiens (Human).